Consider the following 31-residue polypeptide: Monocyclic monoterpene ketone monooxygenase (31 aa).

An FAD-binding site is contributed by 20–25; sequence GAGFXG.

Monomer. It depends on FAD as a cofactor.

It carries out the reaction 1-hydroxylimonen-2-one + NADPH + O2 = 3-isopropenyl-6-oxoheptanoate + NADP(+) + H2O. It catalyses the reaction (1R,4S)-1-hydroxylimonen-2-one + NADPH + O2 + H(+) = (4S,7S)-7-hydroxy-4-isopropenyl-7-methyloxepan-2-one + NADP(+) + H2O. The enzyme catalyses (1S,4R)-1-hydroxylimonen-2-one + NADPH + O2 + H(+) = (4R,7R)-7-hydroxy-4-isopropenyl-7-methyloxepan-2-one + NADP(+) + H2O. The catalysed reaction is (1R,4R)-dihydrocarvone + NADPH + O2 + H(+) = (4R,7R)-4-isopropenyl-7-methyloxepan-2-one + NADP(+) + H2O. It carries out the reaction (1S,4R)-menthone + NADPH + O2 + H(+) = (4S,7R)-7-isopropyl-4-methyloxepan-2-one + NADP(+) + H2O. It catalyses the reaction (1R,4S)-menthone + NADPH + O2 + H(+) = (4R,7S)-7-isopropyl-4-methyloxepan-2-one + NADP(+) + H2O. The enzyme catalyses (1S,4R)-isodihydrocarvone + NADPH + O2 + H(+) = (3S,6R)-6-isopropenyl-3-methyloxepan-2-one + NADP(+) + H2O. Its pathway is terpene metabolism; monoterpene degradation. Catalyzes the NADPH- and oxygen-dependent oxidation of the monocyclic monoterpene ketones 1-hydroxy-2-oxolimonene, dihydrocarvone and menthone. Is able to convert all enantiomers of these natural substrates with almost equal efficiency. Is thus involved in the conversion of the monocyclic monoterpene ketone intermediates formed in the degradation pathways of all stereoisomers of three different monocyclic monoterpenes, i.e. limonene, (dihydro)carveol and menthol, which likely make R.erythropolis able to grow on these compounds as the sole source of carbon and energy. In Rhodococcus erythropolis (Arthrobacter picolinophilus), this protein is Monocyclic monoterpene ketone monooxygenase.